Here is a 180-residue protein sequence, read N- to C-terminus: PRA1 family protein F1 (180 aa).

The next 4 membrane-spanning stretches (helical) occupy residues 63-83, 84-104, 123-143, and 145-165; these read ANTV…VFLS, LIWN…WLFL, IVLI…DAKL, and IAVA…VRKT.

It belongs to the PRA1 family. In terms of assembly, interacts with PRA1F2. In terms of tissue distribution, expressed in hypocotyls, leaf bases and shoot apex.

It localises to the endosome membrane. In terms of biological role, may be involved in both secretory and endocytic intracellular trafficking in the endosomal/prevacuolar compartments. The sequence is that of PRA1 family protein F1 (PRA1F1) from Arabidopsis thaliana (Mouse-ear cress).